A 123-amino-acid polypeptide reads, in one-letter code: Ribosome-binding factor A (123 aa).

The protein belongs to the RbfA family. In terms of assembly, monomer. Binds 30S ribosomal subunits, but not 50S ribosomal subunits or 70S ribosomes.

The protein localises to the cytoplasm. One of several proteins that assist in the late maturation steps of the functional core of the 30S ribosomal subunit. Associates with free 30S ribosomal subunits (but not with 30S subunits that are part of 70S ribosomes or polysomes). Required for efficient processing of 16S rRNA. May interact with the 5'-terminal helix region of 16S rRNA. This Neisseria meningitidis serogroup C (strain 053442) protein is Ribosome-binding factor A.